Reading from the N-terminus, the 115-residue chain is Large ribosomal subunit protein bL19 (115 aa).

The protein belongs to the bacterial ribosomal protein bL19 family.

Its function is as follows. This protein is located at the 30S-50S ribosomal subunit interface and may play a role in the structure and function of the aminoacyl-tRNA binding site. This chain is Large ribosomal subunit protein bL19, found in Aeromonas hydrophila subsp. hydrophila (strain ATCC 7966 / DSM 30187 / BCRC 13018 / CCUG 14551 / JCM 1027 / KCTC 2358 / NCIMB 9240 / NCTC 8049).